We begin with the raw amino-acid sequence, 698 residues long: MKPWIAMVCCLVFFLTTECSHSKPKTHRKDEDKFQISLQKHEFRPRQGKCDGLCSSSSSCNQSCPWNFRGEIVFTCNQNKWQKTIETCTSLSVDTLFQRIHPAASLSLASSSVFPMSLIGNAAPVHIGNVFQGIQKYCPEDYVCIVDAVKSSAVTSGNIAFIVELLKNISSNLQTSGIHDNVNWKKMKNYGKVANHILGPTAISNWAFIANKNASSDLLESVNSFAKKLQIQGKSESIVDELFIQTKGSRISHSSSEHSLSLSVPRYNATEDVLVVIEIPRQALQELSFNASQAIVVAFPTLGAILKEVHRPNTSLQKPIDDLILSLVLPEGLNEIILTFDKINKSQSTSSQCVSWDPATGQWDESPCTVMSDINSTVKCRCRHTKAVTSFSILMSSKPVKNTILNHITFIGLSISIFSLVLCLVIEAIVWSRVVVTEISYMRHVCIVNIAVSLLTANVWFIIGSNFSANVQEDHKWCVAVTFLCHFFFLSLFFWMLFKALLIVYGILVVFRRMMKSRMMAIGFAIGYGCPLVIAVITVTVTEPGEGYTRKDACWLNWNQTKALFAFAIPALAIVAVNLLVVLAVAINTQRPLIGSSKSQDMAIVFRISKNVAILTPLLGLTWGFGLTTLLEGVHLVFHIIFALLNAFQGFFILLFGTIMDHKIRDALRMRVSSLKGKSRAAEKVSLSPANGSRILNR.

Residues 1-19 (MKPWIAMVCCLVFFLTTEC) form the signal peptide. Residues 20–409 (SHSKPKTHRK…VKNTILNHIT (390 aa)) lie on the Extracellular side of the membrane. Residues Asn61, Asn168, Asn213, Asn268, Asn290, Asn344, and Asn375 are each glycosylated (N-linked (GlcNAc...) asparagine). Positions 250-401 (RISHSSSEHS…SILMSSKPVK (152 aa)) constitute a GAIN-B domain. Cystine bridges form between Cys353–Cys380 and Cys368–Cys382. The GPS stretch occupies residues 353-401 (CVSWDPATGQWDESPCTVMSDINSTVKCRCRHTKAVTSFSILMSSKPVK). A helical membrane pass occupies residues 410 to 430 (FIGLSISIFSLVLCLVIEAIV). Residues 431–444 (WSRVVVTEISYMRH) lie on the Cytoplasmic side of the membrane. The chain crosses the membrane as a helical span at residues 445–465 (VCIVNIAVSLLTANVWFIIGS). An N-linked (GlcNAc...) asparagine glycan is attached at Asn466. Topologically, residues 466–486 (NFSANVQEDHKWCVAVTFLCH) are extracellular. Residues 487-507 (FFFLSLFFWMLFKALLIVYGI) form a helical membrane-spanning segment. Residues 508–518 (LVVFRRMMKSR) are Cytoplasmic-facing. A helical membrane pass occupies residues 519–539 (MMAIGFAIGYGCPLVIAVITV). Topologically, residues 540-566 (TVTEPGEGYTRKDACWLNWNQTKALFA) are extracellular. Asn559 is a glycosylation site (N-linked (GlcNAc...) asparagine). Residues 567 to 587 (FAIPALAIVAVNLLVVLAVAI) form a helical membrane-spanning segment. Residues 588–611 (NTQRPLIGSSKSQDMAIVFRISKN) are Cytoplasmic-facing. Residues 612–632 (VAILTPLLGLTWGFGLTTLLE) traverse the membrane as a helical segment. Topologically, residues 633–635 (GVH) are extracellular. A helical membrane pass occupies residues 636 to 656 (LVFHIIFALLNAFQGFFILLF). Topologically, residues 657-698 (GTIMDHKIRDALRMRVSSLKGKSRAAEKVSLSPANGSRILNR) are cytoplasmic.

The protein belongs to the G-protein coupled receptor 2 family. Adhesion G-protein coupled receptor (ADGR) subfamily. In terms of tissue distribution, expressed in squamous epithelia.

The protein resides in the membrane. In terms of biological role, orphan receptor. The polypeptide is Adhesion G protein-coupled receptor F4 (Adgrf4) (Mus musculus (Mouse)).